Reading from the N-terminus, the 314-residue chain is Probable 2-(5''-triphosphoribosyl)-3'-dephosphocoenzyme-A synthase (314 aa).

This sequence belongs to the CitG/MdcB family.

The enzyme catalyses 3'-dephospho-CoA + ATP = 2'-(5''-triphospho-alpha-D-ribosyl)-3'-dephospho-CoA + adenine. This chain is Probable 2-(5''-triphosphoribosyl)-3'-dephosphocoenzyme-A synthase, found in Photobacterium profundum (strain SS9).